Consider the following 296-residue polypeptide: Nucleotide-binding protein MGAS2096_Spy0550 (296 aa).

13–20 (GMSGAGKT) serves as a coordination point for ATP. 63–66 (DMRS) is a GTP binding site.

It belongs to the RapZ-like family.

Displays ATPase and GTPase activities. The sequence is that of Nucleotide-binding protein MGAS2096_Spy0550 from Streptococcus pyogenes serotype M12 (strain MGAS2096).